A 307-amino-acid chain; its full sequence is Homoserine kinase (307 aa).

95-105 contacts ATP; sequence PQSRGLGSSAS.

This sequence belongs to the GHMP kinase family. Homoserine kinase subfamily.

The protein resides in the cytoplasm. The catalysed reaction is L-homoserine + ATP = O-phospho-L-homoserine + ADP + H(+). The protein operates within amino-acid biosynthesis; L-threonine biosynthesis; L-threonine from L-aspartate: step 4/5. Catalyzes the ATP-dependent phosphorylation of L-homoserine to L-homoserine phosphate. The sequence is that of Homoserine kinase from Corynebacterium aurimucosum (strain ATCC 700975 / DSM 44827 / CIP 107346 / CN-1) (Corynebacterium nigricans).